We begin with the raw amino-acid sequence, 142 residues long: PDZ domain-containing protein 11 (142 aa).

In terms of domain architecture, PDZ spans 49-131; that stretch reads TIVLKKPPGA…ILMKVRYFPY (83 aa).

Its subcellular location is the cytoplasm. The chain is PDZ domain-containing protein 11 (pdzd11) from Danio rerio (Zebrafish).